A 248-amino-acid polypeptide reads, in one-letter code: 4-hydroxy-tetrahydrodipicolinate reductase (248 aa).

NAD(+) is bound by residues 8–13, Asp-34, 76–78, and 103–106; these read GAKGRV, GTT, and APNF. The active-site Proton donor/acceptor is His-133. A (S)-2,3,4,5-tetrahydrodipicolinate-binding site is contributed by His-134. Catalysis depends on Lys-137, which acts as the Proton donor. 143 to 144 contributes to the (S)-2,3,4,5-tetrahydrodipicolinate binding site; sequence GT.

This sequence belongs to the DapB family.

It localises to the cytoplasm. It carries out the reaction (S)-2,3,4,5-tetrahydrodipicolinate + NAD(+) + H2O = (2S,4S)-4-hydroxy-2,3,4,5-tetrahydrodipicolinate + NADH + H(+). The catalysed reaction is (S)-2,3,4,5-tetrahydrodipicolinate + NADP(+) + H2O = (2S,4S)-4-hydroxy-2,3,4,5-tetrahydrodipicolinate + NADPH + H(+). It participates in amino-acid biosynthesis; L-lysine biosynthesis via DAP pathway; (S)-tetrahydrodipicolinate from L-aspartate: step 4/4. Its function is as follows. Catalyzes the conversion of 4-hydroxy-tetrahydrodipicolinate (HTPA) to tetrahydrodipicolinate. This Corynebacterium urealyticum (strain ATCC 43042 / DSM 7109) protein is 4-hydroxy-tetrahydrodipicolinate reductase.